A 452-amino-acid polypeptide reads, in one-letter code: MRETKDLREKARQFLTILIPILITQAGLSLITVLDTVMSGKVSAADLAGVAIGSSLWTPVYTGLAGILTAVTPMVAQLMGAKRQKDVPYTVIQSIYVAGIISLAVIVSGYFLIDPVLENLDLERKVAVIAKQYLICIGLGILPLFVYNVMRCFIDSLGKTRVTMLITLCSLPINFVLNYLFIFGNFGFPKLGGAGAGLASAITYWCICLISLYIVHKKTPFHQFRIFGTFYSFSFAESMKLLKIGIPIGFAIFFETSIFAAVTLLMSHFDTVTIASHQAAMNFASLLYMLPLSVSMTLTIVVGFEAGAKRFKDSRAYSYLGISIAVGFSLFTALIILLFREQIAGLYAADRDVLLLTKDFLLYALFFQLSDAIAAPIQGALRGYKDVNYTLVTALVSYWIIGLPVGFVIGTYTSFGAFGYWIGLITGLAAGAVGLFFRLKRIQNRYIHTQSM.

12 consecutive transmembrane segments (helical) span residues 12–34 (RQFL…ITVL), 49–71 (GVAI…LTAV), 91–113 (VIQS…YFLI), 128–150 (VIAK…YNVM), 162–184 (VTML…FIFG), 194–216 (AGAG…YIVH), 245–267 (GIPI…LLMS), 282–304 (NFAS…VVGF), 317–339 (YSYL…ILLF), 359–381 (DFLL…QGAL), 388–410 (NYTL…FVIG), and 415–437 (FGAF…GLFF).

Belongs to the multi antimicrobial extrusion (MATE) (TC 2.A.66.1) family.

It is found in the cell membrane. In terms of biological role, multidrug efflux pump. The polypeptide is Probable multidrug resistance protein NorM (norM) (Bacillus licheniformis (strain ATCC 14580 / DSM 13 / JCM 2505 / CCUG 7422 / NBRC 12200 / NCIMB 9375 / NCTC 10341 / NRRL NRS-1264 / Gibson 46)).